We begin with the raw amino-acid sequence, 386 residues long: Ovalbumin (386 aa).

At G2 the chain carries N-acetylglycine. The segment at residues 22–48 is a signal peptide (not cleaved); the sequence is HHANENIFYCPIAIMSALAMVYLGAKD. The residue at position 69 (S69) is a Phosphoserine. The cysteines at positions 74 and 121 are disulfide-linked. E192 contributes to the Ca(2+) binding site. N293 carries an N-linked (GlcNAc...) asparagine glycan. S345 bears the Phosphoserine mark.

Belongs to the serpin family. Ov-serpin subfamily. Homodimer. In terms of processing, undergoes proteolytic cleavage first at the canonical P1-P1' site, and then at the P8-P7 site by subtilisin. As to expression, major protein of egg white. Expressed in the magnum of the oviduct (at protein level).

Its subcellular location is the secreted. Non-inhibitory serpin. Storage protein of egg white. This chain is Ovalbumin (SERPINB14), found in Gallus gallus (Chicken).